A 446-amino-acid chain; its full sequence is Kynurenine 3-monooxygenase (446 aa).

It belongs to the aromatic-ring hydroxylase family. KMO subfamily. The cofactor is FAD.

It catalyses the reaction L-kynurenine + NADPH + O2 + H(+) = 3-hydroxy-L-kynurenine + NADP(+) + H2O. It functions in the pathway cofactor biosynthesis; NAD(+) biosynthesis; quinolinate from L-kynurenine: step 1/3. Its function is as follows. Catalyzes the hydroxylation of L-kynurenine (L-Kyn) to form 3-hydroxy-L-kynurenine (L-3OHKyn). Required for synthesis of quinolinic acid. In Flavobacterium johnsoniae (strain ATCC 17061 / DSM 2064 / JCM 8514 / BCRC 14874 / CCUG 350202 / NBRC 14942 / NCIMB 11054 / UW101) (Cytophaga johnsonae), this protein is Kynurenine 3-monooxygenase.